A 250-amino-acid polypeptide reads, in one-letter code: 23S rRNA (guanosine-2'-O-)-methyltransferase RlmB (250 aa).

Residues glycine 198, leucine 218, and leucine 227 each coordinate S-adenosyl-L-methionine.

It belongs to the class IV-like SAM-binding methyltransferase superfamily. RNA methyltransferase TrmH family. RlmB subfamily.

The protein localises to the cytoplasm. The enzyme catalyses guanosine(2251) in 23S rRNA + S-adenosyl-L-methionine = 2'-O-methylguanosine(2251) in 23S rRNA + S-adenosyl-L-homocysteine + H(+). Specifically methylates the ribose of guanosine 2251 in 23S rRNA. This is 23S rRNA (guanosine-2'-O-)-methyltransferase RlmB from Pseudomonas syringae pv. tomato (strain ATCC BAA-871 / DC3000).